A 209-amino-acid chain; its full sequence is Large ribosomal subunit protein uL3 (209 aa).

Q150 bears the N5-methylglutamine mark.

The protein belongs to the universal ribosomal protein uL3 family. In terms of assembly, part of the 50S ribosomal subunit. Forms a cluster with proteins L14 and L19. Methylated by PrmB.

Its function is as follows. One of the primary rRNA binding proteins, it binds directly near the 3'-end of the 23S rRNA, where it nucleates assembly of the 50S subunit. The chain is Large ribosomal subunit protein uL3 from Vibrio vulnificus (strain CMCP6).